Here is a 209-residue protein sequence, read N- to C-terminus: MKPFRLYAITGEEFHPGRDVVEVMEEAIQGGVDIIQLRDKTSSKKAVLEKARRLKKLAADYGIPFIVNDHIDVALAVDASGVHVGQDDLPLPEVRKLLGPDKIIGVSTHKLEEALEAEKNGADYIGVGPIFPTNSKADVVDPVTTAYIREVKEHVTIPFVAIGGIKRHNVREVIEAGAEAICVITEIVAARDVKAASQALLAAMEEASQ.

4-amino-2-methyl-5-(diphosphooxymethyl)pyrimidine contacts are provided by residues 36 to 40 (QLRDK) and Asn68. Mg(2+)-binding residues include Asp69 and Asp88. Ser107 is a binding site for 4-amino-2-methyl-5-(diphosphooxymethyl)pyrimidine. 133–135 (TNS) contacts 2-[(2R,5Z)-2-carboxy-4-methylthiazol-5(2H)-ylidene]ethyl phosphate. Lys136 contacts 4-amino-2-methyl-5-(diphosphooxymethyl)pyrimidine. Residues Gly164 and 184–185 (IT) each bind 2-[(2R,5Z)-2-carboxy-4-methylthiazol-5(2H)-ylidene]ethyl phosphate.

Belongs to the thiamine-phosphate synthase family. Requires Mg(2+) as cofactor.

The enzyme catalyses 2-[(2R,5Z)-2-carboxy-4-methylthiazol-5(2H)-ylidene]ethyl phosphate + 4-amino-2-methyl-5-(diphosphooxymethyl)pyrimidine + 2 H(+) = thiamine phosphate + CO2 + diphosphate. It carries out the reaction 2-(2-carboxy-4-methylthiazol-5-yl)ethyl phosphate + 4-amino-2-methyl-5-(diphosphooxymethyl)pyrimidine + 2 H(+) = thiamine phosphate + CO2 + diphosphate. The catalysed reaction is 4-methyl-5-(2-phosphooxyethyl)-thiazole + 4-amino-2-methyl-5-(diphosphooxymethyl)pyrimidine + H(+) = thiamine phosphate + diphosphate. It participates in cofactor biosynthesis; thiamine diphosphate biosynthesis; thiamine phosphate from 4-amino-2-methyl-5-diphosphomethylpyrimidine and 4-methyl-5-(2-phosphoethyl)-thiazole: step 1/1. Condenses 4-methyl-5-(beta-hydroxyethyl)thiazole monophosphate (THZ-P) and 2-methyl-4-amino-5-hydroxymethyl pyrimidine pyrophosphate (HMP-PP) to form thiamine monophosphate (TMP). In Shouchella clausii (strain KSM-K16) (Alkalihalobacillus clausii), this protein is Thiamine-phosphate synthase.